We begin with the raw amino-acid sequence, 880 residues long: Alanine--tRNA ligase (880 aa).

Positions 567, 571, 669, and 673 each coordinate Zn(2+).

The protein belongs to the class-II aminoacyl-tRNA synthetase family. It depends on Zn(2+) as a cofactor.

It localises to the cytoplasm. The catalysed reaction is tRNA(Ala) + L-alanine + ATP = L-alanyl-tRNA(Ala) + AMP + diphosphate. Catalyzes the attachment of alanine to tRNA(Ala) in a two-step reaction: alanine is first activated by ATP to form Ala-AMP and then transferred to the acceptor end of tRNA(Ala). Also edits incorrectly charged Ser-tRNA(Ala) and Gly-tRNA(Ala) via its editing domain. The polypeptide is Alanine--tRNA ligase (Bacillus thuringiensis (strain Al Hakam)).